Consider the following 309-residue polypeptide: Porphobilinogen deaminase (309 aa).

At Cys241 the chain carries S-(dipyrrolylmethanemethyl)cysteine.

It belongs to the HMBS family. Monomer. The cofactor is dipyrromethane.

It carries out the reaction 4 porphobilinogen + H2O = hydroxymethylbilane + 4 NH4(+). Its pathway is porphyrin-containing compound metabolism; protoporphyrin-IX biosynthesis; coproporphyrinogen-III from 5-aminolevulinate: step 2/4. Functionally, tetrapolymerization of the monopyrrole PBG into the hydroxymethylbilane pre-uroporphyrinogen in several discrete steps. This Desulforudis audaxviator (strain MP104C) protein is Porphobilinogen deaminase.